The chain runs to 188 residues: dCTP deaminase (188 aa).

DCTP-binding positions include 111–116 (KSTYAR), 135–137 (TLE), Gln-156, Tyr-170, and Gln-180. The Proton donor/acceptor role is filled by Glu-137.

Belongs to the dCTP deaminase family. As to quaternary structure, homotrimer.

The enzyme catalyses dCTP + H2O + H(+) = dUTP + NH4(+). Its pathway is pyrimidine metabolism; dUMP biosynthesis; dUMP from dCTP (dUTP route): step 1/2. Its function is as follows. Catalyzes the deamination of dCTP to dUTP. This Ectopseudomonas mendocina (strain ymp) (Pseudomonas mendocina) protein is dCTP deaminase.